Consider the following 623-residue polypeptide: Regulatory solute carrier protein family 1 member 1 (623 aa).

Polar residues-rich tracts occupy residues 1-16, 83-99, and 133-144; these read MSSLPTSDGFNHQAHP, CASSADNAPANQTPAIP, and EASLSVTTTRMQ. 4 disordered regions span residues 1–48, 71–99, 116–189, and 433–493; these read MSSL…PDSI, RKEQLPLQDPSDCASSADNAPANQTPAIP, SAEG…APHD, and EELT…PHCT. Basic and acidic residues-rich tracts occupy residues 150-159, 170-180, and 460-473; these read IGEKGWHPEY, QHEEPRNEQHE, and LVDKENVPRSRESV. Residues 474–491 are compositionally biased toward polar residues; sequence NESSLVTLDSAKTSNQPH. Residues 577–617 form the UBA domain; sequence IFPAADIDRILRAGFTLQEALGALHRVGGNADLALLVLLAK.

Interacts with YRDC. As to expression, renal outer cortex and outer medulla, small intestine and liver.

Its subcellular location is the cell membrane. It is found in the nucleus. The protein resides in the golgi apparatus. The protein localises to the trans-Golgi network. Mediates transcriptional and post-transcriptional regulation of SLC5A1. Inhibits a dynamin and PKC-dependent exocytotic pathway of SLC5A1. Also involved in transcriptional regulation of SLC22A2. Exhibits glucose-dependent, short-term inhibition of SLC5A1 and SLC22A2 by inhibiting the release of vesicles from the trans-Golgi network. The protein is Regulatory solute carrier protein family 1 member 1 (RSC1A1) of Sus scrofa (Pig).